Here is an 89-residue protein sequence, read N- to C-terminus: Small ribosomal subunit protein uS15 (89 aa).

Belongs to the universal ribosomal protein uS15 family. In terms of assembly, part of the 30S ribosomal subunit. Forms a bridge to the 50S subunit in the 70S ribosome, contacting the 23S rRNA.

In terms of biological role, one of the primary rRNA binding proteins, it binds directly to 16S rRNA where it helps nucleate assembly of the platform of the 30S subunit by binding and bridging several RNA helices of the 16S rRNA. Its function is as follows. Forms an intersubunit bridge (bridge B4) with the 23S rRNA of the 50S subunit in the ribosome. The polypeptide is Small ribosomal subunit protein uS15 (Parvibaculum lavamentivorans (strain DS-1 / DSM 13023 / NCIMB 13966)).